A 254-amino-acid chain; its full sequence is Methylthioribulose-1-phosphate dehydratase (254 aa).

Cysteine 110 contributes to the substrate binding site. Zn(2+)-binding residues include histidine 127 and histidine 129. Glutamate 156 serves as the catalytic Proton donor/acceptor. Residue histidine 212 coordinates Zn(2+).

The protein belongs to the aldolase class II family. MtnB subfamily. Zn(2+) is required as a cofactor.

The protein localises to the cytoplasm. The catalysed reaction is 5-(methylsulfanyl)-D-ribulose 1-phosphate = 5-methylsulfanyl-2,3-dioxopentyl phosphate + H2O. The protein operates within amino-acid biosynthesis; L-methionine biosynthesis via salvage pathway; L-methionine from S-methyl-5-thio-alpha-D-ribose 1-phosphate: step 2/6. In terms of biological role, catalyzes the dehydration of methylthioribulose-1-phosphate (MTRu-1-P) into 2,3-diketo-5-methylthiopentyl-1-phosphate (DK-MTP-1-P). The protein is Methylthioribulose-1-phosphate dehydratase of Talaromyces marneffei (strain ATCC 18224 / CBS 334.59 / QM 7333) (Penicillium marneffei).